The chain runs to 261 residues: CD40 ligand (261 aa).

Residues 1 to 22 (MIETYNQPSPRSAATGLPVRMK) are Cytoplasmic-facing. Residues 23–43 (IFMYLLTIFLITQMIGSALFA) form a helical; Signal-anchor for type II membrane protein membrane-spanning segment. The Extracellular segment spans residues 44 to 261 (VYLHRRLDKI…GFTSFGLLKL (218 aa)). The THD domain occupies 122–261 (IAAHVISEAS…GFTSFGLLKL (140 aa)). Residues Cys178 and Cys218 are joined by a disulfide bond. Asn240 is a glycosylation site (N-linked (GlcNAc...) asparagine).

This sequence belongs to the tumor necrosis factor family. Homotrimer. Interacts with CD28. CD40 ligand, soluble form: Exists as either a monomer or a homotrimer. Forms a ternary complex between CD40 and integrins for CD40-CD40LG signaling. Post-translationally, the soluble form derives from the membrane form by proteolytic processing.

The protein localises to the cell membrane. It localises to the cell surface. The protein resides in the secreted. Cytokine that acts as a ligand to CD40/TNFRSF5. Costimulates T-cell proliferation and cytokine production. Its cross-linking on T-cells generates a costimulatory signal which enhances the production of IL4 and IL10 in conjunction with the TCR/CD3 ligation and CD28 costimulation. Induces the activation of NF-kappa-B. Induces the activation of kinases MAPK8 and PAK2 in T-cells. Mediates B-cell proliferation in the absence of co-stimulus as well as IgE production in the presence of IL4. Involved in immunoglobulin class switching. Its function is as follows. Acts as a ligand for integrins, specifically ITGA5:ITGB1 and ITGAV:ITGB3; both integrins and the CD40 receptor are required for activation of CD40-CD40LG signaling, which have cell-type dependent effects, such as B-cell activation, NF-kappa-B signaling and anti-apoptotic signaling. In Cercocebus atys (Sooty mangabey), this protein is CD40 ligand (CD40LG).